Here is a 72-residue protein sequence, read N- to C-terminus: Movement protein TGBp3 (72 aa).

Over 1–2 (MS) the chain is Lumenal. The helical transmembrane segment at 3–23 (LSFSLIVFAVGVAVSIGVLTL) threads the bilayer. Topologically, residues 24-72 (TTQQSSSYCLILVDGAKAVVEGCHLRQDIPAILSELKPASSPFNPLFCS) are cytoplasmic.

It belongs to the Tymovirales TGBp3 protein family.

Its subcellular location is the host endoplasmic reticulum membrane. Functionally, plays a role in viral cell-to-cell propagation, by facilitating genome transport to neighboring plant cells through plasmosdesmata. May induce the formation of granular vesicles derived from the Endoplasmic reticulum, which align on actin filaments. This is Movement protein TGBp3 (ORF4) from Lolium latent virus (isolate Lolium/USA/US1/-) (LoLV).